Here is an 86-residue protein sequence, read N- to C-terminus: Putative membrane protein insertion efficiency factor (86 aa).

The protein belongs to the UPF0161 family.

The protein resides in the cell inner membrane. Functionally, could be involved in insertion of integral membrane proteins into the membrane. The protein is Putative membrane protein insertion efficiency factor of Pasteurella multocida (strain Pm70).